Here is a 427-residue protein sequence, read N- to C-terminus: Citrate synthase (427 aa).

Catalysis depends on residues histidine 306 and aspartate 363.

It belongs to the citrate synthase family. Homohexamer.

The catalysed reaction is oxaloacetate + acetyl-CoA + H2O = citrate + CoA + H(+). The protein operates within carbohydrate metabolism; tricarboxylic acid cycle; isocitrate from oxaloacetate: step 1/2. Allosterically inhibited by NADH. In Salmonella typhimurium (strain LT2 / SGSC1412 / ATCC 700720), this protein is Citrate synthase (gltA).